Reading from the N-terminus, the 381-residue chain is Formate dehydrogenase, mitochondrial (381 aa).

Residues 1-25 constitute a mitochondrion transit peptide; sequence MAMSRVASTAARAITSPSSLVFTRE. I125 and N149 together coordinate substrate. Residues T150, 204–205, D224, 259–263, N285, D311, and 335–338 each bind NAD(+); these read RI, PLTEK, and HISG.

It belongs to the D-isomer specific 2-hydroxyacid dehydrogenase family. FDH subfamily. In terms of assembly, homodimer. In terms of tissue distribution, found at high levels in developing tubers, at intermediate level in stems, veins, stolons, and stamens, and at low level in leaves and roots.

It localises to the mitochondrion. It catalyses the reaction formate + NAD(+) = CO2 + NADH. In terms of biological role, catalyzes the NAD(+)-dependent oxidation of formate to carbon dioxide. Involved in the cell stress response. Involved in formate-dependent oxygen uptake coupled to ATP synthesis. This Solanum tuberosum (Potato) protein is Formate dehydrogenase, mitochondrial.